Reading from the N-terminus, the 335-residue chain is MKFSRSIQAIDSHTAGEATRIVVGGIPNIKGNSMPEKKEYLEENLDYLRTAIMLEPRGHNDMFGSVMTQPCCPDADFGIIFMDGGGYLNMCGHGTIGAMTAAIETGVVPAVEPVTHVVMEAPAGIIRGDVTVVDGKAKEVSFLNVPAFLYKEGVEVDLPGVGTVKFDISFGGSFFAIIHASQLGLKIEPQNAGKLTELAMKLRDIINEKIEIQHPTLAHIKTVDLVEIYDEPTHPEATYKNVVIFGQGQVDRSPCGTGTSAKLATLHAKGELKVGEKFVYESILGTLFKGEIVEETKVADFNAVVPKITGSAYITGFNHFVIDEEDPLKHGFILK.

The active-site Proton acceptor is Cys91. Cys255 serves as the catalytic Proton donor.

This sequence belongs to the proline racemase family. In terms of assembly, homodimer.

It catalyses the reaction L-proline = D-proline. Catalyzes the reversible interconversion of L- and D-proline. Plays an important role in the regulation of intra- and extracellular amino acid pools, allowing the bacterium to profit from host precursors and enzymatic pathways. Strong B-cell mitogen. This is Proline racemase from Clostridioides difficile (strain 630) (Peptoclostridium difficile).